Here is a 612-residue protein sequence, read N- to C-terminus: Dihydroxy-acid dehydratase (612 aa).

Asp81 serves as a coordination point for Mg(2+). Cys122 contributes to the [2Fe-2S] cluster binding site. Mg(2+)-binding residues include Asp123 and Lys124. Lys124 is modified (N6-carboxylysine). Residue Cys193 coordinates [2Fe-2S] cluster. Glu489 provides a ligand contact to Mg(2+). Ser515 functions as the Proton acceptor in the catalytic mechanism.

The protein belongs to the IlvD/Edd family. As to quaternary structure, homodimer. [2Fe-2S] cluster is required as a cofactor. Mg(2+) serves as cofactor.

The catalysed reaction is (2R)-2,3-dihydroxy-3-methylbutanoate = 3-methyl-2-oxobutanoate + H2O. It catalyses the reaction (2R,3R)-2,3-dihydroxy-3-methylpentanoate = (S)-3-methyl-2-oxopentanoate + H2O. It functions in the pathway amino-acid biosynthesis; L-isoleucine biosynthesis; L-isoleucine from 2-oxobutanoate: step 3/4. Its pathway is amino-acid biosynthesis; L-valine biosynthesis; L-valine from pyruvate: step 3/4. Functions in the biosynthesis of branched-chain amino acids. Catalyzes the dehydration of (2R,3R)-2,3-dihydroxy-3-methylpentanoate (2,3-dihydroxy-3-methylvalerate) into 2-oxo-3-methylpentanoate (2-oxo-3-methylvalerate) and of (2R)-2,3-dihydroxy-3-methylbutanoate (2,3-dihydroxyisovalerate) into 2-oxo-3-methylbutanoate (2-oxoisovalerate), the penultimate precursor to L-isoleucine and L-valine, respectively. In Azotobacter vinelandii (strain DJ / ATCC BAA-1303), this protein is Dihydroxy-acid dehydratase.